We begin with the raw amino-acid sequence, 253 residues long: Chitooligosaccharide deacetylase (253 aa).

Positions 61 and 125 each coordinate Mg(2+).

This sequence belongs to the YdjC deacetylase family. ChbG subfamily. As to quaternary structure, homodimer. Mg(2+) serves as cofactor.

It is found in the cytoplasm. The catalysed reaction is N,N'-diacetylchitobiose + H2O = N-acetyl-beta-D-glucosaminyl-(1-&gt;4)-D-glucosamine + acetate. It catalyses the reaction diacetylchitobiose-6'-phosphate + H2O = N'-monoacetylchitobiose-6'-phosphate + acetate. The protein operates within glycan degradation; chitin degradation. Functionally, involved in the degradation of chitin. ChbG is essential for growth on the acetylated chitooligosaccharides chitobiose and chitotriose but is dispensable for growth on cellobiose and chitosan dimer, the deacetylated form of chitobiose. Deacetylation of chitobiose-6-P and chitotriose-6-P is necessary for both the activation of the chb promoter by the regulatory protein ChbR and the hydrolysis of phosphorylated beta-glucosides by the phospho-beta-glucosidase ChbF. Catalyzes the removal of only one acetyl group from chitobiose-6-P to yield monoacetylchitobiose-6-P, the inducer of ChbR and the substrate of ChbF. The chain is Chitooligosaccharide deacetylase from Proteus mirabilis (strain HI4320).